The sequence spans 353 residues: Rhodopsin (353 aa).

Residues 1–36 are Extracellular-facing; it reads MNGTEGDNFYVPFSNKTGLARSPYEYPQYYLAEPWK. Asn-2 and Asn-15 each carry an N-linked (GlcNAc...) asparagine glycan. The helical transmembrane segment at 37–61 threads the bilayer; it reads YSALAAYMFFLILVGFPVNFLTLFV. Over 62–73 the chain is Cytoplasmic; it reads TVQHKKLRTPLN. Residues 74-96 form a helical membrane-spanning segment; the sequence is YILLNLAMANLFMVLFGFTVTMY. Residues 97–110 lie on the Extracellular side of the membrane; the sequence is TSMNGYFVFGPTMC. A disulfide bridge connects residues Cys-110 and Cys-187. The chain crosses the membrane as a helical span at residues 111-133; that stretch reads SIEGFFATLGGEVALWSLVVLAI. The 'Ionic lock' involved in activated form stabilization signature appears at 134-136; that stretch reads ERY. Residues 134-152 are Cytoplasmic-facing; sequence ERYIVICKPMGNFRFGNTH. Residues 153–173 traverse the membrane as a helical segment; the sequence is AIMGVAFTWIMALACAAPPLV. Over 174-202 the chain is Extracellular; that stretch reads GWSRYIPEGMQCSCGPDYYTLNPNFNNES. Residues 203–224 form a helical membrane-spanning segment; that stretch reads YVVYMFVVHFLVPFVIIFFCYG. Residues 225 to 252 are Cytoplasmic-facing; it reads RLLCTVKEAAAAQQESASTQKAEKEVTR. A helical membrane pass occupies residues 253 to 274; that stretch reads MVVLMVIGFLVCWVPYASVAFY. Residues 275-286 are Extracellular-facing; that stretch reads IFTHQGSDFGAT. The chain crosses the membrane as a helical span at residues 287 to 308; it reads FMTLPAFFAKSSALYNPVIYIL. At Lys-296 the chain carries N6-(retinylidene)lysine. Over 309-353 the chain is Cytoplasmic; sequence MNKQFRNCMITTLCCGKNPLGDDESGASTSKTEVSSVSTSPVSPA. The interval 330-353 is disordered; it reads DDESGASTSKTEVSSVSTSPVSPA. Residues 336 to 353 show a composition bias toward low complexity; that stretch reads STSKTEVSSVSTSPVSPA.

This sequence belongs to the G-protein coupled receptor 1 family. Opsin subfamily. Post-translationally, phosphorylated on some or all of the serine and threonine residues present in the C-terminal region. Contains one covalently linked retinal chromophore. As to expression, short photoreceptor cells.

It is found in the membrane. The protein resides in the cell projection. It localises to the cilium. The protein localises to the photoreceptor outer segment. Its function is as follows. Photoreceptor required for image-forming vision at low light intensity. While most salt water fish species use retinal as chromophore, most freshwater fish use 3-dehydroretinal, or a mixture of retinal and 3-dehydroretinal. Light-induced isomerization of 11-cis to all-trans retinal triggers a conformational change that activates signaling via G-proteins. Subsequent receptor phosphorylation mediates displacement of the bound G-protein alpha subunit by arrestin and terminates signaling. This chain is Rhodopsin (RHO), found in Lethenteron camtschaticum (Japanese lamprey).